The chain runs to 208 residues: Small ribosomal subunit protein uS4 (208 aa).

The 62-residue stretch at 98 to 159 (RRLDNVAYRL…KSRKVAAISE (62 aa)) folds into the S4 RNA-binding domain.

The protein belongs to the universal ribosomal protein uS4 family. Part of the 30S ribosomal subunit. Contacts protein S5. The interaction surface between S4 and S5 is involved in control of translational fidelity.

Functionally, one of the primary rRNA binding proteins, it binds directly to 16S rRNA where it nucleates assembly of the body of the 30S subunit. With S5 and S12 plays an important role in translational accuracy. This chain is Small ribosomal subunit protein uS4, found in Citrifermentans bemidjiense (strain ATCC BAA-1014 / DSM 16622 / JCM 12645 / Bem) (Geobacter bemidjiensis).